A 432-amino-acid polypeptide reads, in one-letter code: Alpha-enolase (432 aa).

Mg(2+) is bound at residue serine 40. Residues histidine 158 and glutamate 167 each contribute to the substrate site. The active-site Proton donor is the glutamate 210. Residues aspartate 245, glutamate 293, and aspartate 318 each contribute to the Mg(2+) site. Substrate is bound by residues glutamate 293 and aspartate 318. Lysine 343 acts as the Proton acceptor in catalysis. Substrate is bound by residues 370–373 and lysine 394; that span reads SHRS.

Belongs to the enolase family. As to quaternary structure, dimer. Mg(2+) serves as cofactor.

It is found in the cytoplasm. The catalysed reaction is (2R)-2-phosphoglycerate = phosphoenolpyruvate + H2O. It functions in the pathway carbohydrate degradation; glycolysis; pyruvate from D-glyceraldehyde 3-phosphate: step 4/5. In terms of biological role, multifunctional enzyme that, as well as its role in glycolysis, plays a part in various processes such as growth control, hypoxia tolerance and allergic responses. The sequence is that of Alpha-enolase from Thunnus albacares (Yellowfin tuna).